The primary structure comprises 124 residues: Small ribosomal subunit protein uS12 (124 aa).

Residues 1–22 (MATVNQLVRKPRQKPDAKSNVA) are disordered. At aspartate 89 the chain carries 3-methylthioaspartic acid.

The protein belongs to the universal ribosomal protein uS12 family. In terms of assembly, part of the 30S ribosomal subunit. Contacts proteins S8 and S17. May interact with IF1 in the 30S initiation complex.

In terms of biological role, with S4 and S5 plays an important role in translational accuracy. Interacts with and stabilizes bases of the 16S rRNA that are involved in tRNA selection in the A site and with the mRNA backbone. Located at the interface of the 30S and 50S subunits, it traverses the body of the 30S subunit contacting proteins on the other side and probably holding the rRNA structure together. The combined cluster of proteins S8, S12 and S17 appears to hold together the shoulder and platform of the 30S subunit. This Pseudoalteromonas atlantica (strain T6c / ATCC BAA-1087) protein is Small ribosomal subunit protein uS12.